The following is a 101-amino-acid chain: Urease subunit beta (101 aa).

The protein belongs to the urease beta subunit family. In terms of assembly, heterotrimer of UreA (gamma), UreB (beta) and UreC (alpha) subunits. Three heterotrimers associate to form the active enzyme.

It localises to the cytoplasm. The enzyme catalyses urea + 2 H2O + H(+) = hydrogencarbonate + 2 NH4(+). Its pathway is nitrogen metabolism; urea degradation; CO(2) and NH(3) from urea (urease route): step 1/1. The polypeptide is Urease subunit beta (Pseudomonas fluorescens (strain SBW25)).